Reading from the N-terminus, the 500-residue chain is L-arabinose isomerase (500 aa).

Mn(2+) is bound by residues Glu306, Glu333, His349, and His448.

Belongs to the arabinose isomerase family. Mn(2+) serves as cofactor.

It carries out the reaction beta-L-arabinopyranose = L-ribulose. It functions in the pathway carbohydrate degradation; L-arabinose degradation via L-ribulose; D-xylulose 5-phosphate from L-arabinose (bacterial route): step 1/3. Catalyzes the conversion of L-arabinose to L-ribulose. This chain is L-arabinose isomerase, found in Saccharophagus degradans (strain 2-40 / ATCC 43961 / DSM 17024).